The primary structure comprises 507 residues: tRNA-2-methylthio-N(6)-dimethylallyladenosine synthase (507 aa).

Residues 13–129 (RTYQVRTYGC…LPALLERARH (117 aa)) enclose the MTTase N-terminal domain. 6 residues coordinate [4Fe-4S] cluster: Cys-22, Cys-58, Cys-92, Cys-166, Cys-170, and Cys-173. The Radical SAM core domain maps to 152 to 388 (RESAYAAWVS…IALQESVTLE (237 aa)). One can recognise a TRAM domain in the interval 391–462 (QKQIGRMIEV…PHHLIADDGV (72 aa)). The segment covering 459-478 (DDGVRSHRRTRAGDAHEAGK) has biased composition (basic and acidic residues). Positions 459 to 492 (DDGVRSHRRTRAGDAHEAGKKPSTPGIGLGMPAI) are disordered.

This sequence belongs to the methylthiotransferase family. MiaB subfamily. Monomer. [4Fe-4S] cluster serves as cofactor.

The protein localises to the cytoplasm. The enzyme catalyses N(6)-dimethylallyladenosine(37) in tRNA + (sulfur carrier)-SH + AH2 + 2 S-adenosyl-L-methionine = 2-methylsulfanyl-N(6)-dimethylallyladenosine(37) in tRNA + (sulfur carrier)-H + 5'-deoxyadenosine + L-methionine + A + S-adenosyl-L-homocysteine + 2 H(+). Functionally, catalyzes the methylthiolation of N6-(dimethylallyl)adenosine (i(6)A), leading to the formation of 2-methylthio-N6-(dimethylallyl)adenosine (ms(2)i(6)A) at position 37 in tRNAs that read codons beginning with uridine. This is tRNA-2-methylthio-N(6)-dimethylallyladenosine synthase from Mycobacteroides abscessus (strain ATCC 19977 / DSM 44196 / CCUG 20993 / CIP 104536 / JCM 13569 / NCTC 13031 / TMC 1543 / L948) (Mycobacterium abscessus).